A 163-amino-acid chain; its full sequence is MLWKANVWVLGEAAHGISGGTIIYQLLMFIILLALLRKFAWQPLMNIMKQREEHIATKSTRRKNDRQEAEKLLEEQRELMKQSRQEAQALIENAASLAEEQKEQIVASARAEAERVKEAAKKEIEREKEQAMAALREQVASLSVLIASKVIEKELTEQDQAAS.

Residues 1–11 (MLWKANVWVLG) constitute a propeptide that is removed on maturation. Residues 16–36 (GISGGTIIYQLLMFIILLALL) traverse the membrane as a helical segment.

This sequence belongs to the ATPase B chain family. F-type ATPases have 2 components, F(1) - the catalytic core - and F(0) - the membrane proton channel. F(1) has five subunits: alpha(3), beta(3), gamma(1), delta(1), epsilon(1). F(0) has three main subunits: a(1), b(2) and c(10-14). The alpha and beta chains form an alternating ring which encloses part of the gamma chain. F(1) is attached to F(0) by a central stalk formed by the gamma and epsilon chains, while a peripheral stalk is formed by the delta and b chains.

Its subcellular location is the cell membrane. Its function is as follows. F(1)F(0) ATP synthase produces ATP from ADP in the presence of a proton or sodium gradient. F-type ATPases consist of two structural domains, F(1) containing the extramembraneous catalytic core and F(0) containing the membrane proton channel, linked together by a central stalk and a peripheral stalk. During catalysis, ATP synthesis in the catalytic domain of F(1) is coupled via a rotary mechanism of the central stalk subunits to proton translocation. In terms of biological role, component of the F(0) channel, it forms part of the peripheral stalk, linking F(1) to F(0). This chain is ATP synthase subunit b, found in Bacillus sp. (strain PS3).